A 221-amino-acid chain; its full sequence is Esterase C25G4.2 (221 aa).

Active-site charge relay system residues include Ser-106, Asp-166, and His-194.

It belongs to the LovG family.

The polypeptide is Esterase C25G4.2 (Caenorhabditis elegans).